The primary structure comprises 312 residues: Olfactory receptor 6C1 (312 aa).

At 1–23 (MRNHTEITEFILLGLTDDPNFQV) the chain is on the extracellular side. N-linked (GlcNAc...) asparagine glycosylation occurs at asparagine 3. The helical transmembrane segment at 24-44 (VIFVFLLITYMLSITGNLTLI) threads the bilayer. At 45–52 (TITLLDSH) the chain is on the cytoplasmic side. The chain crosses the membrane as a helical span at residues 53–73 (LQTPMYFFLRNFSILEISFTT). Topologically, residues 74–97 (VSIPKFLGNIISGDKTISFNNCIV) are extracellular. The cysteines at positions 95 and 187 are disulfide-linked. A helical membrane pass occupies residues 98–118 (QLFFFILLGVTEFYLLAAMSY). The Cytoplasmic portion of the chain corresponds to 119–137 (DRYVAICKPLHCLSIMNRR). A helical transmembrane segment spans residues 138–158 (VCTLLVFTSWLVSFLIIFPAL). The Extracellular segment spans residues 159–195 (MLLLKLHYCRSNIIDHFTCDYFPLLQLACSDTKFLEV). The chain crosses the membrane as a helical span at residues 196–215 (MGFSCAAFTLMFTLALIFLS). The Cytoplasmic portion of the chain corresponds to 216 to 235 (YIYIIRTILRIPSTSQRTKA). The helical transmembrane segment at 236–256 (FSTCSSHMVVVSISYGSCIFM) threads the bilayer. The Extracellular portion of the chain corresponds to 257–269 (YIKPSAKDRVSLS). A helical transmembrane segment spans residues 270 to 290 (KGVAILNTSVAPMMNPFIYSL). Residues 291 to 312 (RNQQVKQAFINMARKTVFFTST) are Cytoplasmic-facing.

This sequence belongs to the G-protein coupled receptor 1 family.

The protein localises to the cell membrane. Functionally, odorant receptor. This is Olfactory receptor 6C1 (OR6C1) from Homo sapiens (Human).